The sequence spans 166 residues: Small ribosomal subunit protein uS5 (166 aa).

In terms of domain architecture, S5 DRBM spans 11–74; the sequence is LREKLVAINR…EKARANMKRV (64 aa).

It belongs to the universal ribosomal protein uS5 family. In terms of assembly, part of the 30S ribosomal subunit. Contacts proteins S4 and S8.

With S4 and S12 plays an important role in translational accuracy. Its function is as follows. Located at the back of the 30S subunit body where it stabilizes the conformation of the head with respect to the body. The polypeptide is Small ribosomal subunit protein uS5 (Alkalilimnicola ehrlichii (strain ATCC BAA-1101 / DSM 17681 / MLHE-1)).